Here is a 202-residue protein sequence, read N- to C-terminus: Putative 3-methyladenine DNA glycosylase (202 aa).

The protein belongs to the DNA glycosylase MPG family.

In Staphylococcus aureus (strain bovine RF122 / ET3-1), this protein is Putative 3-methyladenine DNA glycosylase.